A 194-amino-acid polypeptide reads, in one-letter code: uncharacterized protein (194 aa).

The protein belongs to the mimivirus L114/R131 family.

This is an uncharacterized protein from Acanthamoeba polyphaga mimivirus (APMV).